We begin with the raw amino-acid sequence, 83 residues long: Small ribosomal subunit protein eS27 (83 aa).

A C4-type zinc finger spans residues 37–59 (CPGCFNITTVFSHAQTVVICGSC).

Belongs to the eukaryotic ribosomal protein eS27 family. As to quaternary structure, component of the small ribosomal subunit (SSU). Mature yeast ribosomes consist of a small (40S) and a large (60S) subunit. The 40S small subunit contains 1 molecule of ribosomal RNA (18S rRNA) and at least 33 different proteins. The large 60S subunit contains 3 rRNA molecules (25S, 5.8S and 5S rRNA) and at least 46 different proteins. Zn(2+) serves as cofactor.

The protein localises to the cytoplasm. Its function is as follows. Component of the ribosome, a large ribonucleoprotein complex responsible for the synthesis of proteins in the cell. The small ribosomal subunit (SSU) binds messenger RNAs (mRNAs) and translates the encoded message by selecting cognate aminoacyl-transfer RNA (tRNA) molecules. The large subunit (LSU) contains the ribosomal catalytic site termed the peptidyl transferase center (PTC), which catalyzes the formation of peptide bonds, thereby polymerizing the amino acids delivered by tRNAs into a polypeptide chain. The nascent polypeptides leave the ribosome through a tunnel in the LSU and interact with protein factors that function in enzymatic processing, targeting, and the membrane insertion of nascent chains at the exit of the ribosomal tunnel. In Schizosaccharomyces pombe (strain 972 / ATCC 24843) (Fission yeast), this protein is Small ribosomal subunit protein eS27 (rps27).